The following is a 363-amino-acid chain: UDP-N-acetylglucosamine--N-acetylmuramyl-(pentapeptide) pyrophosphoryl-undecaprenol N-acetylglucosamine transferase (363 aa).

UDP-N-acetyl-alpha-D-glucosamine contacts are provided by residues 10 to 12, N124, S195, I250, and Q295; that span reads TGG.

This sequence belongs to the glycosyltransferase 28 family. MurG subfamily.

The protein localises to the cell membrane. The catalysed reaction is di-trans,octa-cis-undecaprenyl diphospho-N-acetyl-alpha-D-muramoyl-L-alanyl-D-glutamyl-meso-2,6-diaminopimeloyl-D-alanyl-D-alanine + UDP-N-acetyl-alpha-D-glucosamine = di-trans,octa-cis-undecaprenyl diphospho-[N-acetyl-alpha-D-glucosaminyl-(1-&gt;4)]-N-acetyl-alpha-D-muramoyl-L-alanyl-D-glutamyl-meso-2,6-diaminopimeloyl-D-alanyl-D-alanine + UDP + H(+). It participates in cell wall biogenesis; peptidoglycan biosynthesis. Functionally, cell wall formation. Catalyzes the transfer of a GlcNAc subunit on undecaprenyl-pyrophosphoryl-MurNAc-pentapeptide (lipid intermediate I) to form undecaprenyl-pyrophosphoryl-MurNAc-(pentapeptide)GlcNAc (lipid intermediate II). In Listeria monocytogenes serovar 1/2a (strain ATCC BAA-679 / EGD-e), this protein is UDP-N-acetylglucosamine--N-acetylmuramyl-(pentapeptide) pyrophosphoryl-undecaprenol N-acetylglucosamine transferase.